Here is a 92-residue protein sequence, read N- to C-terminus: Small ribosomal subunit protein uS19c (92 aa).

It belongs to the universal ribosomal protein uS19 family.

The protein localises to the plastid. It is found in the chloroplast. Its function is as follows. Protein S19 forms a complex with S13 that binds strongly to the 16S ribosomal RNA. The protein is Small ribosomal subunit protein uS19c of Morus indica (Mulberry).